The following is a 206-amino-acid chain: MARYIGPKLKLSRREGTDLFLKSGVRAIDSKCKIDTAPGQHGARKARLSDYGVQLREKQKVRRIYGVLEKQFRNYYRDAARQKGNTGENLLQLLEGRLDNVVYRMGFGATRAESRQLVSHKAIMVNGRVVNIPSFQVSPEDVVCVREKAKKQARIKASLEVAGQREKPTWVEVDTAKMEGAFKRLPERSDLSADINEQLIVELYSK.

In terms of domain architecture, S4 RNA-binding spans 96–156 (GRLDNVVYRM…EKAKKQARIK (61 aa)).

Belongs to the universal ribosomal protein uS4 family. In terms of assembly, part of the 30S ribosomal subunit. Contacts protein S5. The interaction surface between S4 and S5 is involved in control of translational fidelity.

Its function is as follows. One of the primary rRNA binding proteins, it binds directly to 16S rRNA where it nucleates assembly of the body of the 30S subunit. In terms of biological role, with S5 and S12 plays an important role in translational accuracy. This is Small ribosomal subunit protein uS4 from Aeromonas salmonicida (strain A449).